Reading from the N-terminus, the 172-residue chain is Ribosome maturation factor RimM (172 aa).

A PRC barrel domain is found at 95–168 (DEGEFYYHQI…RVDVAIMEGL (74 aa)).

This sequence belongs to the RimM family. As to quaternary structure, binds ribosomal protein uS19.

The protein localises to the cytoplasm. Functionally, an accessory protein needed during the final step in the assembly of 30S ribosomal subunit, possibly for assembly of the head region. Essential for efficient processing of 16S rRNA. May be needed both before and after RbfA during the maturation of 16S rRNA. It has affinity for free ribosomal 30S subunits but not for 70S ribosomes. In Streptococcus uberis (strain ATCC BAA-854 / 0140J), this protein is Ribosome maturation factor RimM.